The chain runs to 78 residues: Acyl carrier protein (78 aa).

The 76-residue stretch at 2 to 77 folds into the Carrier domain; the sequence is STIEERVKKI…AAIDFIQANQ (76 aa). O-(pantetheine 4'-phosphoryl)serine is present on Ser-37.

This sequence belongs to the acyl carrier protein (ACP) family. 4'-phosphopantetheine is transferred from CoA to a specific serine of apo-ACP by AcpS. This modification is essential for activity because fatty acids are bound in thioester linkage to the sulfhydryl of the prosthetic group.

It localises to the cytoplasm. Its pathway is lipid metabolism; fatty acid biosynthesis. Functionally, carrier of the growing fatty acid chain in fatty acid biosynthesis. This Pectobacterium atrosepticum (strain SCRI 1043 / ATCC BAA-672) (Erwinia carotovora subsp. atroseptica) protein is Acyl carrier protein.